The sequence spans 207 residues: Small ribosomal subunit protein uS4c (207 aa).

The segment at 22–51 is disordered; that stretch reads TQKNCTRDFPPGQHGPKKKGGGNQKTKESQ. The S4 RNA-binding domain occupies 97-158; sequence MRLDTIIFRL…NSQNFVKNLL (62 aa).

It belongs to the universal ribosomal protein uS4 family. Part of the 30S ribosomal subunit. Contacts protein S5. The interaction surface between S4 and S5 is involved in control of translational fidelity.

Its subcellular location is the plastid. The protein resides in the chloroplast. Functionally, one of the primary rRNA binding proteins, it binds directly to 16S rRNA where it nucleates assembly of the body of the 30S subunit. With S5 and S12 plays an important role in translational accuracy. The protein is Small ribosomal subunit protein uS4c (rps4) of Chlorella vulgaris (Green alga).